The primary structure comprises 829 residues: DNA ligase (829 aa).

Residues 38–42, 87–88, and Glu-127 contribute to the NAD(+) site; these read DAEYD and SL. Catalysis depends on Lys-129, which acts as the N6-AMP-lysine intermediate. Positions 150, 187, 305, and 329 each coordinate NAD(+). Zn(2+)-binding residues include Cys-455, Cys-458, Cys-473, and Cys-479. Residues 534-564 form a disordered region; the sequence is ETADKGSSENENGDAETVSGDLSKYNTQNGK. In terms of domain architecture, BRCT spans 752 to 829; it reads GINKAVAGKT…SEAELLTLLC (78 aa).

This sequence belongs to the NAD-dependent DNA ligase family. LigA subfamily. Mg(2+) serves as cofactor. The cofactor is Mn(2+).

The catalysed reaction is NAD(+) + (deoxyribonucleotide)n-3'-hydroxyl + 5'-phospho-(deoxyribonucleotide)m = (deoxyribonucleotide)n+m + AMP + beta-nicotinamide D-nucleotide.. In terms of biological role, DNA ligase that catalyzes the formation of phosphodiester linkages between 5'-phosphoryl and 3'-hydroxyl groups in double-stranded DNA using NAD as a coenzyme and as the energy source for the reaction. It is essential for DNA replication and repair of damaged DNA. This chain is DNA ligase, found in Neisseria gonorrhoeae (strain ATCC 700825 / FA 1090).